We begin with the raw amino-acid sequence, 997 residues long: Phosphoenolpyruvate carboxylase (997 aa).

The segment at M1–K67 is disordered. Catalysis depends on residues H207 and K649.

Belongs to the PEPCase type 1 family. Mg(2+) serves as cofactor.

It carries out the reaction oxaloacetate + phosphate = phosphoenolpyruvate + hydrogencarbonate. In terms of biological role, forms oxaloacetate, a four-carbon dicarboxylic acid source for the tricarboxylic acid cycle. In Burkholderia vietnamiensis (strain G4 / LMG 22486) (Burkholderia cepacia (strain R1808)), this protein is Phosphoenolpyruvate carboxylase.